Here is a 221-residue protein sequence, read N- to C-terminus: MTDAVTAHEMQQYDQYTINEIGVPSLVLMERAALAGIEVLGAGQFDLSQVLVIAGLGNNGGDGVALARLLMQKGVHVDLLFVGDENRAAHNNAIQLEIAKKYGLTPVNKVKDFRQYTVIVDALFGIGLSKPVPIKLGEMIKRVNAANVPVVAIDVPSGINATTGDIMGSSIRATATVTFAYPKTGLLQGEGVKRSGSIFVKDIGIYSPAELHQFNPEIKEN.

Residues 10 to 211 (MQQYDQYTIN…DIGIYSPAEL (202 aa)) enclose the YjeF N-terminal domain. 58 to 62 (NNGGD) contributes to the (6S)-NADPHX binding site. K(+) is bound by residues N59 and D121. (6S)-NADPHX is bound by residues 125–131 (GIGLSKP) and D154. S157 lines the K(+) pocket.

This sequence belongs to the NnrE/AIBP family. It depends on K(+) as a cofactor.

The enzyme catalyses (6R)-NADHX = (6S)-NADHX. It carries out the reaction (6R)-NADPHX = (6S)-NADPHX. In terms of biological role, catalyzes the epimerization of the S- and R-forms of NAD(P)HX, a damaged form of NAD(P)H that is a result of enzymatic or heat-dependent hydration. This is a prerequisite for the S-specific NAD(P)H-hydrate dehydratase to allow the repair of both epimers of NAD(P)HX. In Weissella koreensis (strain KACC 15510), this protein is NAD(P)H-hydrate epimerase.